We begin with the raw amino-acid sequence, 220 residues long: Vesicle-associated membrane protein 7 (220 aa).

An N-acetylalanine modification is found at alanine 2. At alanine 2–lysine 188 the chain is on the cytoplasmic side. The Longin domain maps to valine 7 to leucine 110. The region spanning arginine 125–lysine 185 is the v-SNARE coiled-coil homology domain. A phosphoserine mark is found at serine 167 and serine 168. A helical; Anchor for type IV membrane protein transmembrane segment spans residues leucine 189 to cysteine 209. Over glycine 210–lysine 220 the chain is Vesicular.

The protein belongs to the synaptobrevin family. As to quaternary structure, may interact with STX17. Component of the SNARE complex composed of STX4, SNAP23 and VAMP7 that binds SYT7 during lysosomal exocytosis. Component of the SNARE complex composed of STX7, STX8, VAMP7 and VTI1B that is required for heterotypic fusion of late endosomes with lysosomes. Interacts with PICALM. Interacts with RAB21. Expressed in brain, kidney, liver, lung, spleen and thymus. Not expressed in heart and skeletal muscle.

The protein localises to the cytoplasmic vesicle. Its subcellular location is the secretory vesicle membrane. It localises to the golgi apparatus. The protein resides in the trans-Golgi network membrane. It is found in the late endosome membrane. The protein localises to the lysosome membrane. Its subcellular location is the endoplasmic reticulum membrane. It localises to the phagosome membrane. The protein resides in the synapse. It is found in the synaptosome. Involved in the targeting and/or fusion of transport vesicles to their target membrane during transport of proteins from the early endosome to the lysosome. Required for heterotypic fusion of late endosomes with lysosomes and homotypic lysosomal fusion. Required for calcium regulated lysosomal exocytosis. Involved in the export of chylomicrons from the endoplasmic reticulum to the cis Golgi. Required for exocytosis of mediators during eosinophil and neutrophil degranulation, and target cell killing by natural killer cells. Required for focal exocytosis of late endocytic vesicles during phagosome formation. The protein is Vesicle-associated membrane protein 7 (Vamp7) of Rattus norvegicus (Rat).